We begin with the raw amino-acid sequence, 152 residues long: Ribosome maturation factor RimP (152 aa).

This sequence belongs to the RimP family.

Its subcellular location is the cytoplasm. Required for maturation of 30S ribosomal subunits. This Clostridium beijerinckii (strain ATCC 51743 / NCIMB 8052) (Clostridium acetobutylicum) protein is Ribosome maturation factor RimP.